The chain runs to 343 residues: Isopentenyl-diphosphate delta-isomerase (343 aa).

6-7 (RK) contacts substrate. FMN is bound by residues S63, 64 to 66 (SMT), S94, and N122. 94–96 (SMR) serves as a coordination point for substrate. Q157 provides a ligand contact to substrate. E158 contributes to the Mg(2+) binding site. FMN contacts are provided by residues K189, T219, 269–271 (GLK), and 290–291 (AG).

This sequence belongs to the IPP isomerase type 2 family. In terms of assembly, homooctamer. Dimer of tetramers. FMN is required as a cofactor. NADPH serves as cofactor. The cofactor is Mg(2+).

It localises to the cytoplasm. The enzyme catalyses isopentenyl diphosphate = dimethylallyl diphosphate. Involved in the biosynthesis of isoprenoids. Catalyzes the 1,3-allylic rearrangement of the homoallylic substrate isopentenyl (IPP) to its allylic isomer, dimethylallyl diphosphate (DMAPP). The chain is Isopentenyl-diphosphate delta-isomerase from Rickettsia bellii (strain OSU 85-389).